Consider the following 410-residue polypeptide: ORC1-type DNA replication protein 2 (410 aa).

ATP-binding positions include 60 to 65, Y213, and R225; that span reads GIGKTT.

This sequence belongs to the CDC6/cdc18 family.

Involved in regulation of DNA replication. Binds DNA. The protein is ORC1-type DNA replication protein 2 (orc2) of Aeropyrum pernix (strain ATCC 700893 / DSM 11879 / JCM 9820 / NBRC 100138 / K1).